Here is a 440-residue protein sequence, read N- to C-terminus: uncharacterized protein (440 aa).

The first 19 residues, 1-19, serve as a signal peptide directing secretion; the sequence is MKKLLLAASIVYFASACLA.

This is an uncharacterized protein from Rickettsia prowazekii (strain Madrid E).